Here is a 216-residue protein sequence, read N- to C-terminus: Uracil phosphoribosyltransferase (216 aa).

CTP contacts are provided by residues 29 to 30 (RK) and R37. A GTP-binding site is contributed by 30 to 34 (KNLVR). R80 serves as a coordination point for 5-phospho-alpha-D-ribose 1-diphosphate. 87 to 96 (EGLLKAFPKA) lines the CTP pocket. 5-phospho-alpha-D-ribose 1-diphosphate is bound by residues R105 and 140–148 (DPMIATAST). Residues I203 and 208-210 (GDA) contribute to the uracil site. D209 contributes to the 5-phospho-alpha-D-ribose 1-diphosphate binding site.

The protein belongs to the UPRTase family. Homotetramer. It depends on Mg(2+) as a cofactor.

It carries out the reaction UMP + diphosphate = 5-phospho-alpha-D-ribose 1-diphosphate + uracil. The protein operates within pyrimidine metabolism; UMP biosynthesis via salvage pathway; UMP from uracil: step 1/1. Allosterically activated by GTP. Inhibited by CTP and UMP in combination. Its function is as follows. Catalyzes the conversion of uracil and 5-phospho-alpha-D-ribose 1-diphosphate (PRPP) to UMP and diphosphate. The protein is Uracil phosphoribosyltransferase (upp) of Saccharolobus solfataricus (strain ATCC 35092 / DSM 1617 / JCM 11322 / P2) (Sulfolobus solfataricus).